The following is a 344-amino-acid chain: Heat-inducible transcription repressor HrcA (344 aa).

The protein belongs to the HrcA family.

Its function is as follows. Negative regulator of class I heat shock genes (grpE-dnaK-dnaJ and groELS operons). Prevents heat-shock induction of these operons. The sequence is that of Heat-inducible transcription repressor HrcA from Streptococcus equi subsp. zooepidemicus (strain MGCS10565).